Here is a 307-residue protein sequence, read N- to C-terminus: D-alanine--D-alanine ligase (307 aa).

One can recognise an ATP-grasp domain in the interval 101–301; it reads KDVLRAAGVP…FGELVRWMVE (201 aa). 128–182 contributes to the ATP binding site; the sequence is MTPPYVVKPLGEGSSFGVIIVRADQTHPPQELTRDDWAYGDLVLVERFVAGRELT. Residues Asp-251, Glu-268, and Asn-270 each contribute to the Mg(2+) site.

Belongs to the D-alanine--D-alanine ligase family. Requires Mg(2+) as cofactor. The cofactor is Mn(2+).

It localises to the cytoplasm. It catalyses the reaction 2 D-alanine + ATP = D-alanyl-D-alanine + ADP + phosphate + H(+). Its pathway is cell wall biogenesis; peptidoglycan biosynthesis. Cell wall formation. This Methylocella silvestris (strain DSM 15510 / CIP 108128 / LMG 27833 / NCIMB 13906 / BL2) protein is D-alanine--D-alanine ligase.